The chain runs to 396 residues: Ribosomal RNA large subunit methyltransferase I (396 aa).

The 80-residue stretch at 2–81 (SVRLVLAKGR…ESIDIAFFSR (80 aa)) folds into the PUA domain.

This sequence belongs to the methyltransferase superfamily. RlmI family.

Its subcellular location is the cytoplasm. The catalysed reaction is cytidine(1962) in 23S rRNA + S-adenosyl-L-methionine = 5-methylcytidine(1962) in 23S rRNA + S-adenosyl-L-homocysteine + H(+). In terms of biological role, specifically methylates the cytosine at position 1962 (m5C1962) of 23S rRNA. This is Ribosomal RNA large subunit methyltransferase I from Escherichia coli (strain K12 / MC4100 / BW2952).